Here is a 363-residue protein sequence, read N- to C-terminus: RNA polymerase II holoenzyme cyclin-like subunit (363 aa).

In terms of domain architecture, Cyclin N-terminal spans 53-143 (YQMLRLAKNL…IGECEFWLIS (91 aa)). Positions 252–312 (TPGGSGSPAM…SPQKEKSKLQ (61 aa)) are disordered. The span at 265-276 (IQQNPPNQAYQL) shows a compositional bias: polar residues. Residues 277-298 (TPQQQEMFRQQQMQQQNRQPET) show a composition bias toward low complexity. Over residues 299–310 (QAKDSPQKEKSK) the composition is skewed to basic and acidic residues.

This sequence belongs to the cyclin family. Cyclin C subfamily. In terms of assembly, component of the SRB8-11 complex, a regulatory module of the Mediator complex.

It localises to the nucleus. Component of the SRB8-11 complex. The SRB8-11 complex is a regulatory module of the Mediator complex which is itself involved in regulation of basal and activated RNA polymerase II-dependent transcription. The SRB8-11 complex may be involved in the transcriptional repression of a subset of genes regulated by Mediator. It may inhibit the association of the Mediator complex with RNA polymerase II to form the holoenzyme complex. The SRB8-11 complex phosphorylates the C-terminal domain (CTD) of the largest subunit of RNA polymerase II. This is RNA polymerase II holoenzyme cyclin-like subunit (SSN8) from Pyricularia oryzae (strain 70-15 / ATCC MYA-4617 / FGSC 8958) (Rice blast fungus).